We begin with the raw amino-acid sequence, 346 residues long: Large ribosomal subunit protein uL1c (346 aa).

The transit peptide at 1 to 70 directs the protein to the chloroplast; it reads MAACATHSSL…RASNHKFIVS (70 aa). Tyr-129 is subject to Phosphotyrosine. Thr-177 is modified (phosphothreonine). Residue Ser-197 is modified to Phosphoserine.

This sequence belongs to the universal ribosomal protein uL1 family. Part of the 50S ribosomal subunit.

It localises to the plastid. The protein resides in the chloroplast. In terms of biological role, this protein binds directly to 23S ribosomal RNA. This is Large ribosomal subunit protein uL1c (RPL1) from Arabidopsis thaliana (Mouse-ear cress).